A 522-amino-acid chain; its full sequence is MASSRASSTQATKTKAPDDLVAPVVKKPHIYYGSLEEKERERLAKGESGILGKDGLKAGIEAGNINITSGEVFEIEEHISERQAEVLAEFERRKRARQINVSTDDSEVKACLRALGEPITLFGEGPAERRERLRNILSVVGTDALKKTKKDDEKSKKSKEEYQQTWYHEGPNSLKVARLWIANYSLPRAMKRLEEARLHKEIPETTRTSQMQELHKSLRSLNNFCSQIGDDRPISYCHFSPNSKMLATACWSGLCKLWSVPDCNLLHTLRGHNTNVGAIVFHPKSTVSLDPKDVNLASCAADGSVKLWSLDSDEPVADIEGHTVRVARVMWHPSGRFLGTTCYDRSWRLWDLEAQEEILHQEGHSMGVYDIAFHQDGSLAGTGGLDAFGRVWDLRTGRCIMFLEGHLKEIYGINFSPNGYHIATGSGDNTCKVWDLRQRRCVYTIPAHQNLVTGVKFEPIHGNFLLTGAYDNTAKIWTHPGWSPLKTLAGHEGKVMGLDISSDGQLIATCSYDRTFKLWMAE.

Polar residues predominate over residues 1 to 13 (MASSRASSTQATK). The interval 1 to 20 (MASSRASSTQATKTKAPDDL) is disordered. Position 27 is an N6-acetyllysine (K27). 7 WD repeats span residues 229–268 (GDDRPISYCHFSPNSKMLATACWSGLCKLWSVPDCNLLHT), 271–318 (GHNT…PVAD), 321–360 (GHTVRVARVMWHPSGRFLGTTCYDRSWRLWDLEAQEEILH), 363–402 (GHSMGVYDIAFHQDGSLAGTGGLDAFGRVWDLRTGRCIMF), 405–444 (GHLKEIYGINFSPNGYHIATGSGDNTCKVWDLRQRRCVYT), 447–487 (AHQN…PLKT), and 490–521 (GHEGKVMGLDISSDGQLIATCSYDRTFKLWMA).

As to quaternary structure, component of the precatalytic spliceosome (spliceosome B complex). Component of the U4/U6-U5 tri-snRNP complex, a building block of the precatalytic spliceosome (spliceosome B complex). The U4/U6-U5 tri-snRNP complex is composed of the U4, U6 and U5 snRNAs and at least PRPF3, PRPF4, PRPF6, PRPF8, PRPF31, SNRNP200, TXNL4A, SNRNP40, SNRPB, SNRPD1, SNRPD2, SNRPD3, SNRPE, SNRPF, SNRPG, DDX23, CD2BP2, PPIH, SNU13, EFTUD2, SART1 and USP39, plus LSM2, LSM3, LSM4, LSM5, LSM6, LSM7 and LSM8. Interacts directly with PRPF18, PPIH and PRPF3. Part of a heteromeric complex containing PPIH, PRPF3 and PRPF4 that is stable in the absence of RNA. Interacts with ERCC6.

The protein localises to the nucleus. Its subcellular location is the nucleus speckle. Its function is as follows. Plays a role in pre-mRNA splicing as component of the U4/U6-U5 tri-snRNP complex that is involved in spliceosome assembly, and as component of the precatalytic spliceosome (spliceosome B complex). The chain is U4/U6 small nuclear ribonucleoprotein Prp4 (PRPF4) from Homo sapiens (Human).